A 312-amino-acid polypeptide reads, in one-letter code: Ribosomal protein L11 methyltransferase (312 aa).

S-adenosyl-L-methionine contacts are provided by Thr160, Gly181, Asp203, and Asn246.

It belongs to the methyltransferase superfamily. PrmA family.

Its subcellular location is the cytoplasm. It catalyses the reaction L-lysyl-[protein] + 3 S-adenosyl-L-methionine = N(6),N(6),N(6)-trimethyl-L-lysyl-[protein] + 3 S-adenosyl-L-homocysteine + 3 H(+). Methylates ribosomal protein L11. In Staphylococcus saprophyticus subsp. saprophyticus (strain ATCC 15305 / DSM 20229 / NCIMB 8711 / NCTC 7292 / S-41), this protein is Ribosomal protein L11 methyltransferase.